The following is a 406-amino-acid chain: 3-phosphoshikimate 1-carboxyvinyltransferase (406 aa).

3 residues coordinate 3-phosphoshikimate: lysine 20, serine 21, and arginine 25. Lysine 20 is a phosphoenolpyruvate binding site. Phosphoenolpyruvate is bound by residues glycine 84 and arginine 112. 3-phosphoshikimate contacts are provided by serine 155, serine 156, glutamine 157, aspartate 295, glutamine 317, and lysine 321. Glutamine 157 serves as a coordination point for phosphoenolpyruvate. Aspartate 295 (proton acceptor) is an active-site residue. Arginine 325, arginine 366, and lysine 392 together coordinate phosphoenolpyruvate.

This sequence belongs to the EPSP synthase family. Monomer.

It localises to the cytoplasm. The catalysed reaction is 3-phosphoshikimate + phosphoenolpyruvate = 5-O-(1-carboxyvinyl)-3-phosphoshikimate + phosphate. It participates in metabolic intermediate biosynthesis; chorismate biosynthesis. In terms of biological role, catalyzes the transfer of the enolpyruvyl moiety of phosphoenolpyruvate (PEP) to the 5-hydroxyl of shikimate-3-phosphate (S3P) to produce enolpyruvyl shikimate-3-phosphate and inorganic phosphate. This is 3-phosphoshikimate 1-carboxyvinyltransferase from Pyrococcus furiosus (strain ATCC 43587 / DSM 3638 / JCM 8422 / Vc1).